Consider the following 100-residue polypeptide: Urease subunit gamma (100 aa).

The protein belongs to the urease gamma subunit family. As to quaternary structure, heterotrimer of UreA (gamma), UreB (beta) and UreC (alpha) subunits. Three heterotrimers associate to form the active enzyme.

The protein localises to the cytoplasm. It carries out the reaction urea + 2 H2O + H(+) = hydrogencarbonate + 2 NH4(+). Its pathway is nitrogen metabolism; urea degradation; CO(2) and NH(3) from urea (urease route): step 1/1. This is Urease subunit gamma from Pseudomonas fluorescens (strain Pf0-1).